A 747-amino-acid polypeptide reads, in one-letter code: Phosphoribosylformylglycinamidine synthase subunit PurL (747 aa).

The active site involves H46. 2 residues coordinate ATP: Y49 and K88. A Mg(2+)-binding site is contributed by E90. Substrate-binding positions include 91-94 (SHNH) and R113. H92 acts as the Proton acceptor in catalysis. D114 lines the Mg(2+) pocket. Residue Q237 participates in substrate binding. Position 265 (D265) interacts with Mg(2+). 309 to 311 (ESQ) contacts substrate. Positions 493 and 530 each coordinate ATP. A Mg(2+)-binding site is contributed by N531. S533 is a substrate binding site.

This sequence belongs to the FGAMS family. In terms of assembly, monomer. Part of the FGAM synthase complex composed of 1 PurL, 1 PurQ and 2 PurS subunits.

It is found in the cytoplasm. It carries out the reaction N(2)-formyl-N(1)-(5-phospho-beta-D-ribosyl)glycinamide + L-glutamine + ATP + H2O = 2-formamido-N(1)-(5-O-phospho-beta-D-ribosyl)acetamidine + L-glutamate + ADP + phosphate + H(+). Its pathway is purine metabolism; IMP biosynthesis via de novo pathway; 5-amino-1-(5-phospho-D-ribosyl)imidazole from N(2)-formyl-N(1)-(5-phospho-D-ribosyl)glycinamide: step 1/2. Functionally, part of the phosphoribosylformylglycinamidine synthase complex involved in the purines biosynthetic pathway. Catalyzes the ATP-dependent conversion of formylglycinamide ribonucleotide (FGAR) and glutamine to yield formylglycinamidine ribonucleotide (FGAM) and glutamate. The FGAM synthase complex is composed of three subunits. PurQ produces an ammonia molecule by converting glutamine to glutamate. PurL transfers the ammonia molecule to FGAR to form FGAM in an ATP-dependent manner. PurS interacts with PurQ and PurL and is thought to assist in the transfer of the ammonia molecule from PurQ to PurL. The sequence is that of Phosphoribosylformylglycinamidine synthase subunit PurL from Deinococcus radiodurans (strain ATCC 13939 / DSM 20539 / JCM 16871 / CCUG 27074 / LMG 4051 / NBRC 15346 / NCIMB 9279 / VKM B-1422 / R1).